A 661-amino-acid polypeptide reads, in one-letter code: Tegument protein UL46 homolog (661 aa).

The segment at 1–31 (MFSRFARSFSSDDRTRKSYDGSYQSFNAGER) is disordered. Over residues 10 to 19 (SSDDRTRKSY) the composition is skewed to basic and acidic residues. A run of 2 helical transmembrane segments spans residues 299 to 319 (AGTGVAFILAATTASALTALL) and 339 to 359 (AAIVAAVELITLLHHHFQYLI).

This sequence belongs to the herpesviridae HHV-1 VP11/12 protein family. In terms of processing, phosphorylated by host LCK. The phosphorylation seems to be lymphocyte-specific.

The protein resides in the virion tegument. It localises to the host cytoplasm. It is found in the host membrane. Plays a role in the activation of the host PI3K/AKT pathway to promote cell survival. Interacts with and activates PI3KR1 in order to phosphorylate host AKT on its activating residues. Activates the host AP-1 pathway by triggering phosphorylation of host ERK1/2. Participates in host BIM and BAD phosphorylation, leading to apoptosis inhibition. This chain is Tegument protein UL46 homolog, found in Varicella-zoster virus (strain Oka vaccine) (HHV-3).